We begin with the raw amino-acid sequence, 236 residues long: 2-C-methyl-D-erythritol 4-phosphate cytidylyltransferase (236 aa).

Belongs to the IspD/TarI cytidylyltransferase family. IspD subfamily. Homodimer.

It catalyses the reaction 2-C-methyl-D-erythritol 4-phosphate + CTP + H(+) = 4-CDP-2-C-methyl-D-erythritol + diphosphate. The protein operates within isoprenoid biosynthesis; isopentenyl diphosphate biosynthesis via DXP pathway; isopentenyl diphosphate from 1-deoxy-D-xylulose 5-phosphate: step 2/6. In terms of biological role, catalyzes the formation of 4-diphosphocytidyl-2-C-methyl-D-erythritol from CTP and 2-C-methyl-D-erythritol 4-phosphate (MEP). This Klebsiella pneumoniae subsp. pneumoniae (strain ATCC 700721 / MGH 78578) protein is 2-C-methyl-D-erythritol 4-phosphate cytidylyltransferase.